Consider the following 96-residue polypeptide: Prokineticin Bm8-d (96 aa).

Positions 1–19 (MKCFAQIVVLLLVIAFSHG) are cleaved as a signal peptide. Intrachain disulfides connect C26–C38, C32–C50, C37–C78, C60–C86, and C80–C95.

The protein belongs to the AVIT (prokineticin) family. As to expression, expressed by the skin glands.

It is found in the secreted. Functionally, potent agonist for both PKR1/PROKR1 and PKR2/PROKR2, and inducer of a potent and long-lasting hyperalgesia. Also potentiates capsaicin-induced TRPV1 current, when tested on DRG neurons. At subnanomolar concentrations, this protein both induces potent chemotaxis of macrophages and stimulates LPS-induced production of the pro-inflammatory cytokines IL-1 and IL-12. In vivo, potently stimulates the contraction of the guinea-pig gastrointestinal (GI) smooth muscle (nanomolar concentration). The chain is Prokineticin Bm8-d from Bombina maxima (Giant fire-bellied toad).